The chain runs to 1705 residues: Clathrin heavy chain 1 (1705 aa).

A2 carries the post-translational modification N-acetylalanine. Residues 2 to 492 (AAANAPIIMK…VDNDLALKIY (491 aa)) form a globular terminal domain region. WD40-like repeat stretches follow at residues 25-67 (FITF…RPIT), 68-113 (ADSA…MPEQ), 114-155 (VAFW…ANLA), 156-205 (NNQI…QALE), 206-270 (AHAA…PDFA), 271-314 (DDFP…ISPD), and 315-343 (PIFLTSEASSVGGFYAINRRGQVLLATVN). The tract at residues 462 to 478 (ENWLAEDKLECSEELGD) is binding site for the uncoating ATPase, involved in lattice disassembly. The interval 493–536 (IKARATPKVVAAFAERREFDKILIYSKQVGYTPDYMFLLQTILR) is flexible linker. Positions 537 to 648 (TDPQGAVNFA…QSLKHYSELP (112 aa)) are distal segment. A heavy chain arm region spans residues 537 to 1705 (TDPQGAVNFA…PYGMPPMGGY (1169 aa)). 7 CHCR repeats span residues 551 to 697 (QMEG…QIIV), 700 to 842 (CKEY…PEDF), 847 to 986 (ILSV…QLID), 993 to 1138 (LPES…VSDA), 1142 to 1283 (FIRA…FRLA), 1288 to 1434 (LNII…DIIN), and 1437 to 1580 (LNVL…KECF). The segment at 653–1705 (VIVNTHAIEP…PYGMPPMGGY (1053 aa)) is proximal segment. Positions 1227–1536 (AAKIIYAFIS…YIYKKAGRWK (310 aa)) are involved in binding clathrin light chain. The tract at residues 1564–1705 (AEQLLVYFIE…PYGMPPMGGY (142 aa)) is trimerization.

Belongs to the clathrin heavy chain family. As to quaternary structure, clathrin triskelions, composed of 3 heavy chains and 3 light chains, are the basic subunits of the clathrin coat. Interacts with SCYL2B.

The protein localises to the cytoplasmic vesicle membrane. The protein resides in the membrane. Its subcellular location is the coated pit. In terms of biological role, clathrin is the major protein of the polyhedral coat of coated pits and vesicles. Mediates endocytosis and is required for a correct polar distribution of PIN auxin transporters. In Arabidopsis thaliana (Mouse-ear cress), this protein is Clathrin heavy chain 1.